The following is a 140-amino-acid chain: Nucleoside diphosphate kinase (140 aa).

The ATP site is built by Lys-9, Phe-57, Arg-85, Thr-91, Arg-102, and Asn-112. The Pros-phosphohistidine intermediate role is filled by His-115.

The protein belongs to the NDK family. As to quaternary structure, homotetramer. It depends on Mg(2+) as a cofactor.

Its subcellular location is the cytoplasm. It catalyses the reaction a 2'-deoxyribonucleoside 5'-diphosphate + ATP = a 2'-deoxyribonucleoside 5'-triphosphate + ADP. The enzyme catalyses a ribonucleoside 5'-diphosphate + ATP = a ribonucleoside 5'-triphosphate + ADP. In terms of biological role, major role in the synthesis of nucleoside triphosphates other than ATP. The ATP gamma phosphate is transferred to the NDP beta phosphate via a ping-pong mechanism, using a phosphorylated active-site intermediate. This Chlorobium luteolum (strain DSM 273 / BCRC 81028 / 2530) (Pelodictyon luteolum) protein is Nucleoside diphosphate kinase.